A 999-amino-acid polypeptide reads, in one-letter code: Transcription-repair-coupling factor (999 aa).

Residues 499-656 enclose the Helicase ATP-binding domain; the sequence is DLSSHRVMDR…LSQIKGISSL (158 aa). 512-519 contacts ATP; sequence GDVGFGKT. The DEEH box motif lies at 609-612; the sequence is DEEH. Residues 677-833 enclose the Helicase C-terminal domain; the sequence is LLKEIIYREL…SVAYHDLEIR (157 aa).

This sequence in the N-terminal section; belongs to the UvrB family. It in the C-terminal section; belongs to the helicase family. RecG subfamily.

The protein resides in the cytoplasm. In terms of biological role, couples transcription and DNA repair by recognizing RNA polymerase (RNAP) stalled at DNA lesions. Mediates ATP-dependent release of RNAP and its truncated transcript from the DNA, and recruitment of nucleotide excision repair machinery to the damaged site. In Helicobacter pylori (strain ATCC 700392 / 26695) (Campylobacter pylori), this protein is Transcription-repair-coupling factor.